The chain runs to 278 residues: Orotidine 5'-phosphate decarboxylase (278 aa).

K95 serves as the catalytic Proton donor.

This sequence belongs to the OMP decarboxylase family. Type 2 subfamily.

The enzyme catalyses orotidine 5'-phosphate + H(+) = UMP + CO2. The protein operates within pyrimidine metabolism; UMP biosynthesis via de novo pathway; UMP from orotate: step 2/2. The protein is Orotidine 5'-phosphate decarboxylase of Corynebacterium glutamicum (strain R).